The following is a 103-amino-acid chain: DNA-binding protein TRF1 (103 aa).

DNA-binding protein that recognizes the inverted terminal repeats of the pGKl linear DNA plasmids. This is DNA-binding protein TRF1 (TRF1) from Kluyveromyces lactis (strain ATCC 8585 / CBS 2359 / DSM 70799 / NBRC 1267 / NRRL Y-1140 / WM37) (Yeast).